Reading from the N-terminus, the 211-residue chain is Lysozyme g (211 aa).

A signal peptide spans 1–26 (MLGKNDPMCLVLVLLGLTALLGICQG). Intrachain disulfides connect C30/C86 and C44/C55. Residues E99 and D112 contribute to the active site.

The protein belongs to the glycosyl hydrolase 23 family. In terms of tissue distribution, granulocyte compartment of myelomonocytic cells.

The protein localises to the secreted. The enzyme catalyses Hydrolysis of (1-&gt;4)-beta-linkages between N-acetylmuramic acid and N-acetyl-D-glucosamine residues in a peptidoglycan and between N-acetyl-D-glucosamine residues in chitodextrins.. This Gallus gallus (Chicken) protein is Lysozyme g.